We begin with the raw amino-acid sequence, 137 residues long: uncharacterized protein (137 aa).

Transmembrane regions (helical) follow at residues 4-26, 35-57, 62-84, 89-111, and 116-135; these read AIIL…KIVC, IVVN…NIII, ILTY…YYAL, ASIV…ILFL, and TLPQ…LLSI. The EamA domain maps to 13–135; sequence VFYGVGTFFA…IIIGIILLSI (123 aa).

It is found in the cell membrane. This is an uncharacterized protein from Methanocaldococcus jannaschii (strain ATCC 43067 / DSM 2661 / JAL-1 / JCM 10045 / NBRC 100440) (Methanococcus jannaschii).